The sequence spans 843 residues: Pullulanase (843 aa).

A signal peptide spans 1–19; the sequence is MKTKLWLLLVLLLSALIFS. Catalysis depends on D535, which acts as the Nucleophile. E564 serves as the catalytic Proton donor.

This sequence belongs to the glycosyl hydrolase 13 family.

It carries out the reaction Hydrolysis of (1-&gt;6)-alpha-D-glucosidic linkages in pullulan, amylopectin and glycogen, and in the alpha- and beta-limit dextrins of amylopectin and glycogen.. This chain is Pullulanase (pulA), found in Thermotoga maritima (strain ATCC 43589 / DSM 3109 / JCM 10099 / NBRC 100826 / MSB8).